A 398-amino-acid polypeptide reads, in one-letter code: Beta-1,6-galactosyltransferase GALT29A (398 aa).

The Cytoplasmic segment spans residues 1–6 (MKRSVR). A helical; Signal-anchor for type II membrane protein transmembrane segment spans residues 7–27 (PLFSALLFAFFAATLICRVAI). At 28–398 (RRSSFSFASA…FKIPLVQVYH (371 aa)) the chain is on the lumenal side. N-linked (GlcNAc...) asparagine glycans are attached at residues N221 and N346.

Belongs to the glycosyltransferase 29 family. As to quaternary structure, interacts with GALT31A.

It localises to the golgi apparatus membrane. Functionally, galactosyltransferase involved in the biosynthesis of type II arabinogalactan. Possesses galactosyltransferase (GalT) activity in vitro, transferring galactose from UDP-galactose to a mixture of various oligosaccharides derived from arabinogalactan proteins. Forms a complex with GALT31A that can work cooperatively to enhance the activities of adding galactose residues at O6 positions to beta-1,6-galactan and beta-1,3-galactan. This is Beta-1,6-galactosyltransferase GALT29A from Arabidopsis thaliana (Mouse-ear cress).